Here is a 160-residue protein sequence, read N- to C-terminus: Transcriptional repressor NrdR (160 aa).

A zinc finger lies at C3–C34. An ATP-cone domain is found at P49–E139.

This sequence belongs to the NrdR family. Requires Zn(2+) as cofactor.

Its function is as follows. Negatively regulates transcription of bacterial ribonucleotide reductase nrd genes and operons by binding to NrdR-boxes. This chain is Transcriptional repressor NrdR, found in Bordetella bronchiseptica (strain ATCC BAA-588 / NCTC 13252 / RB50) (Alcaligenes bronchisepticus).